Reading from the N-terminus, the 282-residue chain is 4-diphosphocytidyl-2-C-methyl-D-erythritol kinase (282 aa).

Lys-15 is an active-site residue. 98–108 (PMGGGVGGGSS) provides a ligand contact to ATP. Residue Asp-140 is part of the active site.

It belongs to the GHMP kinase family. IspE subfamily.

It catalyses the reaction 4-CDP-2-C-methyl-D-erythritol + ATP = 4-CDP-2-C-methyl-D-erythritol 2-phosphate + ADP + H(+). Its pathway is isoprenoid biosynthesis; isopentenyl diphosphate biosynthesis via DXP pathway; isopentenyl diphosphate from 1-deoxy-D-xylulose 5-phosphate: step 3/6. In terms of biological role, catalyzes the phosphorylation of the position 2 hydroxy group of 4-diphosphocytidyl-2C-methyl-D-erythritol. This Azoarcus sp. (strain BH72) protein is 4-diphosphocytidyl-2-C-methyl-D-erythritol kinase.